The chain runs to 344 residues: Phosphoribosylformylglycinamidine cyclo-ligase (344 aa).

This sequence belongs to the AIR synthase family.

Its subcellular location is the cytoplasm. The enzyme catalyses 2-formamido-N(1)-(5-O-phospho-beta-D-ribosyl)acetamidine + ATP = 5-amino-1-(5-phospho-beta-D-ribosyl)imidazole + ADP + phosphate + H(+). The protein operates within purine metabolism; IMP biosynthesis via de novo pathway; 5-amino-1-(5-phospho-D-ribosyl)imidazole from N(2)-formyl-N(1)-(5-phospho-D-ribosyl)glycinamide: step 2/2. The chain is Phosphoribosylformylglycinamidine cyclo-ligase from Glaesserella parasuis serovar 5 (strain SH0165) (Haemophilus parasuis).